The chain runs to 143 residues: Small ribosomal subunit protein bS6 (143 aa).

The tract at residues 95–143 (GPDTEQSFIMKSKDDKGDKPERRRRDDDENGDVGVSNDSDNDGGNAEAA) is disordered. Over residues 105 to 121 (KSKDDKGDKPERRRRDD) the composition is skewed to basic and acidic residues.

Belongs to the bacterial ribosomal protein bS6 family.

Binds together with bS18 to 16S ribosomal RNA. This is Small ribosomal subunit protein bS6 from Xylella fastidiosa (strain M23).